Here is a 618-residue protein sequence, read N- to C-terminus: Alpha-dioxygenase PIOX (618 aa).

H157 serves as the catalytic Proton acceptor. D158 is a Ca(2+) binding site. Heme b is bound at residue H162. Ca(2+)-binding residues include T210, W212, D214, and S216. H311 contacts hexadecanoate. 3 residues coordinate heme b: H382, R479, and R483. Residue E599 participates in hexadecanoate binding.

This sequence belongs to the peroxidase family. Requires heme b as cofactor. Ca(2+) serves as cofactor.

It catalyses the reaction a 1,2-saturated fatty acid + O2 = a (2R)-2-hydroperoxy fatty acid. The enzyme catalyses (9Z,12Z)-octadecadienoate + O2 = (2R,9Z,12Z)-2-hydroperoxyoctadecadienoate. It carries out the reaction hexadecanoate + O2 = (2R)-2-hydroperoxyhexadecanoate. The catalysed reaction is (9Z,12Z,15Z)-octadecatrienoate + O2 = (R)-2-hydroperoxy-(9Z,12Z,15Z)-octadecatrienoate. It catalyses the reaction tetradecanoate + O2 = (2R)-2-hydroperoxytetradecanoate. The enzyme catalyses octadecanoate + O2 = (2R)-2-hydroperoxyoctadecanoate. It carries out the reaction (9Z)-octadecenoate + O2 = (2R,9Z)-2-hydroperoxyoctadecenoate. In terms of biological role, alpha-dioxygenase that catalyzes the primary oxygenation step of a variety of 14-20 carbon fatty acids, containing up to three unsaturated bonds, into their corresponding 2R-hydroperoxides. Involved in the production of oxylipins that function in cell signaling, wound healing, and protection from infection. The sequence is that of Alpha-dioxygenase PIOX from Oryza sativa subsp. japonica (Rice).